The chain runs to 97 residues: Small ribosomal subunit protein bS20 (97 aa).

This sequence belongs to the bacterial ribosomal protein bS20 family.

Binds directly to 16S ribosomal RNA. The polypeptide is Small ribosomal subunit protein bS20 (Methylibium petroleiphilum (strain ATCC BAA-1232 / LMG 22953 / PM1)).